A 275-amino-acid polypeptide reads, in one-letter code: Bis(5'-nucleosyl)-tetraphosphatase, symmetrical (275 aa).

It belongs to the Ap4A hydrolase family.

It carries out the reaction P(1),P(4)-bis(5'-adenosyl) tetraphosphate + H2O = 2 ADP + 2 H(+). Functionally, hydrolyzes diadenosine 5',5'''-P1,P4-tetraphosphate to yield ADP. The protein is Bis(5'-nucleosyl)-tetraphosphatase, symmetrical of Hamiltonella defensa subsp. Acyrthosiphon pisum (strain 5AT).